The sequence spans 194 residues: Leucyl/phenylalanyl-tRNA--protein transferase (194 aa).

The protein belongs to the L/F-transferase family.

It is found in the cytoplasm. The catalysed reaction is N-terminal L-lysyl-[protein] + L-leucyl-tRNA(Leu) = N-terminal L-leucyl-L-lysyl-[protein] + tRNA(Leu) + H(+). It catalyses the reaction N-terminal L-arginyl-[protein] + L-leucyl-tRNA(Leu) = N-terminal L-leucyl-L-arginyl-[protein] + tRNA(Leu) + H(+). The enzyme catalyses L-phenylalanyl-tRNA(Phe) + an N-terminal L-alpha-aminoacyl-[protein] = an N-terminal L-phenylalanyl-L-alpha-aminoacyl-[protein] + tRNA(Phe). Functions in the N-end rule pathway of protein degradation where it conjugates Leu, Phe and, less efficiently, Met from aminoacyl-tRNAs to the N-termini of proteins containing an N-terminal arginine or lysine. This is Leucyl/phenylalanyl-tRNA--protein transferase from Chlorobium phaeobacteroides (strain DSM 266 / SMG 266 / 2430).